A 450-amino-acid polypeptide reads, in one-letter code: Chromosomal replication initiator protein DnaA (450 aa).

Residues 1–76 (MNLNDILKEL…KKILKQPVNI (76 aa)) are domain I, interacts with DnaA modulators. Positions 76–107 (ISFTYEQEYQKQLEKTESINKDHSDIISKKNK) are domain II. A domain III, AAA+ region region spans residues 108-327 (KVNENTFENF…GSVSRLNFWS (220 aa)). ATP contacts are provided by Gly-151, Gly-153, Lys-154, and Thr-155. The interval 328 to 450 (QQNPEEKVIT…DILKNKILTK (123 aa)) is domain IV, binds dsDNA.

This sequence belongs to the DnaA family. In terms of assembly, oligomerizes as a right-handed, spiral filament on DNA at oriC.

The protein localises to the cytoplasm. Its subcellular location is the cell membrane. Plays an essential role in the initiation and regulation of chromosomal replication. ATP-DnaA binds to the origin of replication (oriC) to initiate formation of the DNA replication initiation complex once per cell cycle. Binds the DnaA box (a 9 base pair repeat at the origin) and separates the double-stranded (ds)DNA. Forms a right-handed helical filament on oriC DNA; dsDNA binds to the exterior of the filament while single-stranded (ss)DNA is stabiized in the filament's interior. The ATP-DnaA-oriC complex binds and stabilizes one strand of the AT-rich DNA unwinding element (DUE), permitting loading of DNA polymerase. After initiation quickly degrades to an ADP-DnaA complex that is not apt for DNA replication. Binds acidic phospholipids. This chain is Chromosomal replication initiator protein DnaA, found in Mycoplasma capricolum subsp. capricolum (strain California kid / ATCC 27343 / NCTC 10154).